Reading from the N-terminus, the 296-residue chain is uncharacterized protein (296 aa).

Residues 1–60 enclose the HTH lysR-type domain; the sequence is MDPKISYFQTFIVASKTKSFSKAAKRLGITQGTVSNHISALEKYFDAQLFLRTPEGVDLT. Positions 20–39 form a DNA-binding region, H-T-H motif; the sequence is FSKAAKRLGITQGTVSNHIS.

Belongs to the LysR transcriptional regulatory family.

This is an uncharacterized protein from Methanocaldococcus jannaschii (strain ATCC 43067 / DSM 2661 / JAL-1 / JCM 10045 / NBRC 100440) (Methanococcus jannaschii).